A 192-amino-acid chain; its full sequence is Ribonuclease HII (192 aa).

The RNase H type-2 domain maps to Lys2–Val187. The a divalent metal cation site is built by Asp8, Glu9, and Asp97.

It belongs to the RNase HII family. Requires Mn(2+) as cofactor. It depends on Mg(2+) as a cofactor.

It is found in the cytoplasm. It catalyses the reaction Endonucleolytic cleavage to 5'-phosphomonoester.. Its function is as follows. Endonuclease that specifically degrades the RNA of RNA-DNA hybrids. This Aliarcobacter butzleri (strain RM4018) (Arcobacter butzleri) protein is Ribonuclease HII.